The chain runs to 548 residues: T-complex protein 1 subunit theta (548 aa).

Ala2 is modified (N-acetylalanine). At Ser23 the chain carries Phosphoserine. Tyr30 is modified (phosphotyrosine). Tyr47 and Gly48 together coordinate ADP. Residue Asp99 participates in Mg(2+) binding. 4 residues coordinate ADP: Gly100, Thr101, Asn102, and Phe103. Residues Gly100, Thr101, and Asn102 each contribute to the ATP site. Ser162 carries the phosphoserine modification. ADP is bound by residues Met169, Ser170, and Lys171. 2 residues coordinate ATP: Ser170 and Lys171. Residues Lys224, Lys254, and Lys260 each participate in a glycyl lysine isopeptide (Lys-Gly) (interchain with G-Cter in SUMO2) cross-link. A phosphoserine mark is found at Ser269 and Ser317. N6-acetyllysine is present on residues Lys318 and Lys400. Gly412 provides a ligand contact to ADP. Residue Gly412 coordinates ATP. Residue Lys459 forms a Glycyl lysine isopeptide (Lys-Gly) (interchain with G-Cter in SUMO1) linkage. At Lys466 the chain carries N6-acetyllysine. Asp499 contacts ADP. ATP is bound by residues Asp499 and Lys504. Tyr505 is subject to Phosphotyrosine. The segment at 529–548 (PAGGPKPPSGKKDWDDDQND) is disordered. Lys534 participates in a covalent cross-link: Glycyl lysine isopeptide (Lys-Gly) (interchain with G-Cter in SUMO2). Position 537 is a phosphoserine (Ser537). A Glycyl lysine isopeptide (Lys-Gly) (interchain with G-Cter in SUMO2) cross-link involves residue Lys539.

This sequence belongs to the TCP-1 chaperonin family. In terms of assembly, component of the chaperonin-containing T-complex (TRiC), a hexadecamer composed of two identical back-to-back stacked rings enclosing a protein folding chamber. Each ring is made up of eight different subunits: TCP1/CCT1, CCT2, CCT3, CCT4, CCT5, CCT6A/CCT6, CCT7, CCT8. Interacts with PACRG. Interacts with DNAAF4. Interacts with synaptic plasticity regulator PANTS.

It is found in the cytoplasm. It localises to the cytoskeleton. The protein resides in the microtubule organizing center. Its subcellular location is the centrosome. The protein localises to the cilium basal body. It carries out the reaction ATP + H2O = ADP + phosphate + H(+). Its function is as follows. Component of the chaperonin-containing T-complex (TRiC), a molecular chaperone complex that assists the folding of actin, tubulin and other proteins upon ATP hydrolysis. The TRiC complex mediates the folding of WRAP53/TCAB1, thereby regulating telomere maintenance. As part of the TRiC complex may play a role in the assembly of BBSome, a complex involved in ciliogenesis regulating transports vesicles to the cilia. The sequence is that of T-complex protein 1 subunit theta (Cct8) from Mus musculus (Mouse).